We begin with the raw amino-acid sequence, 341 residues long: tRNA N6-adenosine threonylcarbamoyltransferase (341 aa).

Positions 111 and 115 each coordinate Fe cation. Substrate contacts are provided by residues 134–138 (LVSGG), Asp167, Gly180, and Asn276. Asp304 lines the Fe cation pocket.

Belongs to the KAE1 / TsaD family. The cofactor is Fe(2+).

It localises to the cytoplasm. The catalysed reaction is L-threonylcarbamoyladenylate + adenosine(37) in tRNA = N(6)-L-threonylcarbamoyladenosine(37) in tRNA + AMP + H(+). Required for the formation of a threonylcarbamoyl group on adenosine at position 37 (t(6)A37) in tRNAs that read codons beginning with adenine. Is involved in the transfer of the threonylcarbamoyl moiety of threonylcarbamoyl-AMP (TC-AMP) to the N6 group of A37, together with TsaE and TsaB. TsaD likely plays a direct catalytic role in this reaction. The protein is tRNA N6-adenosine threonylcarbamoyltransferase of Pseudomonas putida (strain W619).